Reading from the N-terminus, the 73-residue chain is Gas vesicle protein A (73 aa).

Belongs to the gas vesicle GvpA family. As to quaternary structure, the gas vesicle shell is 2 nm thick and consists of a single layer of this protein. It forms helical ribs nearly perpendicular to the long axis of the vesicle.

Its subcellular location is the gas vesicle shell. Functionally, gas vesicles are hollow, gas filled proteinaceous nanostructures found in some microorganisms. During planktonic growth they allow positioning of the organism at a favorable depth for light or nutrient acquisition. GvpA forms the protein shell. The protein is Gas vesicle protein A of Nostoc punctiforme (strain ATCC 29133 / PCC 73102).